The primary structure comprises 360 residues: Biotin synthase 2 (360 aa).

The 228-residue stretch at 53–280 (RRVKLNFLVN…TAEVRLSGGR (228 aa)) folds into the Radical SAM core domain. 3 residues coordinate [4Fe-4S] cluster: cysteine 68, cysteine 72, and cysteine 75. [2Fe-2S] cluster contacts are provided by cysteine 112, cysteine 145, cysteine 205, and arginine 275.

This sequence belongs to the radical SAM superfamily. Biotin synthase family. As to quaternary structure, homodimer. The cofactor is [4Fe-4S] cluster. [2Fe-2S] cluster serves as cofactor.

It catalyses the reaction (4R,5S)-dethiobiotin + (sulfur carrier)-SH + 2 reduced [2Fe-2S]-[ferredoxin] + 2 S-adenosyl-L-methionine = (sulfur carrier)-H + biotin + 2 5'-deoxyadenosine + 2 L-methionine + 2 oxidized [2Fe-2S]-[ferredoxin]. It participates in cofactor biosynthesis; biotin biosynthesis; biotin from 7,8-diaminononanoate: step 2/2. Catalyzes the conversion of dethiobiotin (DTB) to biotin by the insertion of a sulfur atom into dethiobiotin via a radical-based mechanism. This chain is Biotin synthase 2, found in Frankia casuarinae (strain DSM 45818 / CECT 9043 / HFP020203 / CcI3).